Consider the following 145-residue polypeptide: Large ribosomal subunit protein uL14m (145 aa).

The transit peptide at 1–30 directs the protein to the mitochondrion; sequence MAVLTGLFGFFAYVRGAVSQRCFSTSGSLS.

Belongs to the universal ribosomal protein uL14 family. In terms of assembly, component of the mitochondrial ribosome large subunit (39S) which comprises a 16S rRNA and about 50 distinct proteins. Interacts with MALSU1.

It is found in the mitochondrion. May form part of 2 intersubunit bridges in the assembled ribosome. Upon binding to MALSU1, intersubunit bridge formation is blocked, preventing ribosome formation and repressing translation. The chain is Large ribosomal subunit protein uL14m (Mrpl14) from Rattus norvegicus (Rat).